Consider the following 294-residue polypeptide: UDP-3-O-acyl-N-acetylglucosamine deacetylase (294 aa).

Positions 75, 232, and 236 each coordinate Zn(2+). Catalysis depends on His259, which acts as the Proton donor.

The protein belongs to the LpxC family. Zn(2+) is required as a cofactor.

It carries out the reaction a UDP-3-O-[(3R)-3-hydroxyacyl]-N-acetyl-alpha-D-glucosamine + H2O = a UDP-3-O-[(3R)-3-hydroxyacyl]-alpha-D-glucosamine + acetate. Its pathway is glycolipid biosynthesis; lipid IV(A) biosynthesis; lipid IV(A) from (3R)-3-hydroxytetradecanoyl-[acyl-carrier-protein] and UDP-N-acetyl-alpha-D-glucosamine: step 2/6. Its function is as follows. Catalyzes the hydrolysis of UDP-3-O-myristoyl-N-acetylglucosamine to form UDP-3-O-myristoylglucosamine and acetate, the committed step in lipid A biosynthesis. The polypeptide is UDP-3-O-acyl-N-acetylglucosamine deacetylase (Campylobacter jejuni (strain RM1221)).